Reading from the N-terminus, the 413-residue chain is Gamma-glutamyl phosphate reductase (413 aa).

This sequence belongs to the gamma-glutamyl phosphate reductase family.

Its subcellular location is the cytoplasm. It catalyses the reaction L-glutamate 5-semialdehyde + phosphate + NADP(+) = L-glutamyl 5-phosphate + NADPH + H(+). The protein operates within amino-acid biosynthesis; L-proline biosynthesis; L-glutamate 5-semialdehyde from L-glutamate: step 2/2. In terms of biological role, catalyzes the NADPH-dependent reduction of L-glutamate 5-phosphate into L-glutamate 5-semialdehyde and phosphate. The product spontaneously undergoes cyclization to form 1-pyrroline-5-carboxylate. This chain is Gamma-glutamyl phosphate reductase, found in Thermus thermophilus (strain ATCC BAA-163 / DSM 7039 / HB27).